Here is a 532-residue protein sequence, read N- to C-terminus: Probable cytochrome c oxidase subunit 1 (532 aa).

Transmembrane regions (helical) follow at residues 33–53 (IMYIIFAVFAGIVGGLFSLLF), 74–94 (VLITAHAVIMVFFMIMPALFG), 95–115 (GFGNYFVPLLIGAPDMAFPRL), 118–138 (ISFWLLVPAFLLLMGSAFVDG), 163–183 (MAIFSLHLTGLSSILGSINLI), 200–220 (PLFVWSILVTAFLIILAMPVL), 252–272 (LFWFFGHPEVYIVILPGFGIV), and 284–304 (IFGYQGMIGAMVIIGFVGFIV). Residue His-79 coordinates Fe(II)-heme a. The Cu cation site is built by His-258 and Tyr-262. Cu cation-binding residues include His-307 and His-308. 2 helical membrane passes run 318–338 (ALIYFTAGTMIIAVPTGIKIF) and 355–375 (MLFSIGFIILFTIGGVTGIIL). His-393 contacts heme a3. Helical transmembrane passes span 394 to 414 (FHYTMSLGALFTAFAGFYYWF), 431 to 451 (FWITFIGVNLTFFPQHFLGLA), and 473 to 493 (IGAGISMFAALYFVFIVFYTL). His-395 is a Fe(II)-heme a binding site.

The protein belongs to the heme-copper respiratory oxidase family.

It localises to the cell membrane. It catalyses the reaction 4 Fe(II)-[cytochrome c] + O2 + 8 H(+)(in) = 4 Fe(III)-[cytochrome c] + 2 H2O + 4 H(+)(out). It participates in energy metabolism; oxidative phosphorylation. Cytochrome c oxidase is the component of the respiratory chain that catalyzes the reduction of oxygen to water. Subunits 1-3 form the functional core of the enzyme complex. CO I is the catalytic subunit of the enzyme. Electrons originating in cytochrome c are transferred via the copper A center of subunit 2 and heme A of subunit 1 to the bimetallic center formed by heme A3 and copper B. The protein is Probable cytochrome c oxidase subunit 1 (ctaD) of Rickettsia conorii (strain ATCC VR-613 / Malish 7).